A 635-amino-acid chain; its full sequence is Beta-mannosyltransferase 2 (635 aa).

Residues 1–6 (MRTRLN) lie on the Cytoplasmic side of the membrane. A helical membrane pass occupies residues 7 to 27 (FLLLCIASVLSVIWIGVLLTW). Residues 28–635 (NDNNLGGISL…EKKEAEKKGK (608 aa)) are Extracellular-facing. Residue asparagine 484 is glycosylated (N-linked (GlcNAc...) asparagine). The stretch at 512–635 (TRGEAERRRR…EKKEAEKKGK (124 aa)) forms a coiled coil. The segment at 517–635 (ERRRRVAEER…EKKEAEKKGK (119 aa)) is disordered.

Belongs to the BMT family.

It is found in the membrane. Beta-mannosyltransferase involved in cell wall biosynthesis. Initiates the beta-mannosylation of core N-linked glycans. The sequence is that of Beta-mannosyltransferase 2 (BMT2) from Komagataella phaffii (strain ATCC 76273 / CBS 7435 / CECT 11047 / NRRL Y-11430 / Wegner 21-1) (Yeast).